The primary structure comprises 931 residues: Bifunctional glutamine synthetase adenylyltransferase/adenylyl-removing enzyme (931 aa).

Positions 1-434 (MTLAPADLPV…STEFAALLAP (434 aa)) are adenylyl removase. An adenylyl transferase region spans residues 441–931 (PDALANYWRS…ACRAAELPFA (491 aa)).

Belongs to the GlnE family. It depends on Mg(2+) as a cofactor.

It carries out the reaction [glutamine synthetase]-O(4)-(5'-adenylyl)-L-tyrosine + phosphate = [glutamine synthetase]-L-tyrosine + ADP. It catalyses the reaction [glutamine synthetase]-L-tyrosine + ATP = [glutamine synthetase]-O(4)-(5'-adenylyl)-L-tyrosine + diphosphate. In terms of biological role, involved in the regulation of glutamine synthetase GlnA, a key enzyme in the process to assimilate ammonia. When cellular nitrogen levels are high, the C-terminal adenylyl transferase (AT) inactivates GlnA by covalent transfer of an adenylyl group from ATP to specific tyrosine residue of GlnA, thus reducing its activity. Conversely, when nitrogen levels are low, the N-terminal adenylyl removase (AR) activates GlnA by removing the adenylyl group by phosphorolysis, increasing its activity. The regulatory region of GlnE binds the signal transduction protein PII (GlnB) which indicates the nitrogen status of the cell. The chain is Bifunctional glutamine synthetase adenylyltransferase/adenylyl-removing enzyme from Stenotrophomonas maltophilia (strain K279a).